Reading from the N-terminus, the 802-residue chain is Phenylalanine--tRNA ligase beta subunit (802 aa).

The 110-residue stretch at 40 to 149 folds into the tRNA-binding domain; the sequence is RPELDFVKIV…EGAEIGKTIR (110 aa). Residues 407–484 enclose the B5 domain; it reads HKEVRIHTDI…RTRGYDTIQV (78 aa). The Mg(2+) site is built by aspartate 462, aspartate 468, glutamate 471, and glutamate 472. Residues 710–802 form the FDX-ACB domain; it reads SQFPEAEIDI…LAGKNGFVLR (93 aa).

It belongs to the phenylalanyl-tRNA synthetase beta subunit family. Type 1 subfamily. In terms of assembly, tetramer of two alpha and two beta subunits. The cofactor is Mg(2+).

It localises to the cytoplasm. It catalyses the reaction tRNA(Phe) + L-phenylalanine + ATP = L-phenylalanyl-tRNA(Phe) + AMP + diphosphate + H(+). The polypeptide is Phenylalanine--tRNA ligase beta subunit (Leptospira borgpetersenii serovar Hardjo-bovis (strain L550)).